Consider the following 355-residue polypeptide: Histidinol-phosphate aminotransferase (355 aa).

Lys218 is modified (N6-(pyridoxal phosphate)lysine).

This sequence belongs to the class-II pyridoxal-phosphate-dependent aminotransferase family. Histidinol-phosphate aminotransferase subfamily. As to quaternary structure, homodimer. Pyridoxal 5'-phosphate serves as cofactor.

It carries out the reaction L-histidinol phosphate + 2-oxoglutarate = 3-(imidazol-4-yl)-2-oxopropyl phosphate + L-glutamate. Its pathway is amino-acid biosynthesis; L-histidine biosynthesis; L-histidine from 5-phospho-alpha-D-ribose 1-diphosphate: step 7/9. This Chlorobium limicola (strain DSM 245 / NBRC 103803 / 6330) protein is Histidinol-phosphate aminotransferase.